The primary structure comprises 138 residues: Putative pre-16S rRNA nuclease (138 aa).

Belongs to the YqgF nuclease family.

It localises to the cytoplasm. Functionally, could be a nuclease involved in processing of the 5'-end of pre-16S rRNA. This Helicobacter hepaticus (strain ATCC 51449 / 3B1) protein is Putative pre-16S rRNA nuclease.